The sequence spans 306 residues: Putative F-box protein At1g47300 (306 aa).

Residues Met1–Leu45 form the F-box domain. The disordered stretch occupies residues Asp235–Lys278. Over residues Lys242–Glu270 the composition is skewed to acidic residues.

In Arabidopsis thaliana (Mouse-ear cress), this protein is Putative F-box protein At1g47300.